Here is a 150-residue protein sequence, read N- to C-terminus: MINSSRINLNSYFCSIFIVSIVVISLICSEALQIQEAKEPIRGHLTRVTIQNDNDYLLGIHCKSRDDDLGFHILAKGELFGWKFHVNFCYSTLYFCGFSQGQMKKGVFEIYRANRDFYRCANCTWKAEKDGIYGYSEDPVKGYLFYNWLK.

Asparagine 122 carries N-linked (GlcNAc...) asparagine glycosylation.

The protein belongs to the plant self-incompatibility (S1) protein family.

It is found in the secreted. This is S-protein homolog 24 from Arabidopsis thaliana (Mouse-ear cress).